The chain runs to 100 residues: Aspartyl/glutamyl-tRNA(Asn/Gln) amidotransferase subunit C (100 aa).

It belongs to the GatC family. As to quaternary structure, heterotrimer of A, B and C subunits.

It carries out the reaction L-glutamyl-tRNA(Gln) + L-glutamine + ATP + H2O = L-glutaminyl-tRNA(Gln) + L-glutamate + ADP + phosphate + H(+). It catalyses the reaction L-aspartyl-tRNA(Asn) + L-glutamine + ATP + H2O = L-asparaginyl-tRNA(Asn) + L-glutamate + ADP + phosphate + 2 H(+). Its function is as follows. Allows the formation of correctly charged Asn-tRNA(Asn) or Gln-tRNA(Gln) through the transamidation of misacylated Asp-tRNA(Asn) or Glu-tRNA(Gln) in organisms which lack either or both of asparaginyl-tRNA or glutaminyl-tRNA synthetases. The reaction takes place in the presence of glutamine and ATP through an activated phospho-Asp-tRNA(Asn) or phospho-Glu-tRNA(Gln). In Erythrobacter litoralis (strain HTCC2594), this protein is Aspartyl/glutamyl-tRNA(Asn/Gln) amidotransferase subunit C.